A 332-amino-acid polypeptide reads, in one-letter code: MQQVVYVASPESQQIHVWQLGAQGNLTLLQTVDVPGQVQPMVIAPNKRHLYVGVRPDFRVLSYRIDEQGKLTEAGVASLPGSPTHLSTDNDGRFLFSASYSGACVSVSPIGADGIVGEPIQQLDGLEGCHSTNIDPTNRVVWAPCLKEDRIRLYDLGATGELSVHRQAEMTTVAGAGPRHMAFHPNQRFAYCVNELDSSVDVYQLDAASGELEKVQTLDAMPAGFNDTRWAADIHITPNGRFLYISDRTASLLSIFQVSEDGSALTLTGHQPTETQPRGFNIDNTGEFLISAGQKSQHIEVYHIDQNTGDLQPLARYAVGQGPMWVSVLALD.

The protein belongs to the cycloisomerase 2 family.

The enzyme catalyses 6-phospho-D-glucono-1,5-lactone + H2O = 6-phospho-D-gluconate + H(+). The protein operates within carbohydrate degradation; pentose phosphate pathway; D-ribulose 5-phosphate from D-glucose 6-phosphate (oxidative stage): step 2/3. In terms of biological role, catalyzes the hydrolysis of 6-phosphogluconolactone to 6-phosphogluconate. The sequence is that of 6-phosphogluconolactonase from Pectobacterium carotovorum subsp. carotovorum (strain PC1).